The primary structure comprises 290 residues: Probable proteasome subunit beta type-6 (290 aa).

It belongs to the peptidase T1B family. As to quaternary structure, the 26S proteasome consists of a 20S proteasome core and two 19S regulatory subunits. The 20S proteasome core is composed of 28 subunits that are arranged in four stacked rings, resulting in a barrel-shaped structure. The two end rings are each formed by seven alpha subunits, and the two central rings are each formed by seven beta subunits. The catalytic chamber with the active sites is on the inside of the barrel.

Its subcellular location is the cytoplasm. It is found in the nucleus. Functionally, non-catalytic component of the proteasome which degrades poly-ubiquitinated proteins in the cytoplasm and in the nucleus. It is essential for the regulated turnover of proteins and for the removal of misfolded proteins. The proteasome is a multicatalytic proteinase complex that is characterized by its ability to cleave peptides with Arg, Phe, Tyr, Leu, and Glu adjacent to the leaving group at neutral or slightly basic pH. It has an ATP-dependent proteolytic activity. The protein is Probable proteasome subunit beta type-6 (PRE7) of Encephalitozoon cuniculi (strain GB-M1) (Microsporidian parasite).